A 168-amino-acid chain; its full sequence is Peptide deformylase (168 aa).

Fe cation contacts are provided by C91 and H133. Residue E134 is part of the active site. A Fe cation-binding site is contributed by H137.

It belongs to the polypeptide deformylase family. Fe(2+) is required as a cofactor.

The catalysed reaction is N-terminal N-formyl-L-methionyl-[peptide] + H2O = N-terminal L-methionyl-[peptide] + formate. Its function is as follows. Removes the formyl group from the N-terminal Met of newly synthesized proteins. Requires at least a dipeptide for an efficient rate of reaction. N-terminal L-methionine is a prerequisite for activity but the enzyme has broad specificity at other positions. This Endomicrobium trichonymphae protein is Peptide deformylase.